Consider the following 797-residue polypeptide: Xaa-Pro dipeptidyl-peptidase (797 aa).

Active-site charge relay system residues include Ser370, Asp490, and His521.

This sequence belongs to the peptidase S15 family. Homodimer.

Its subcellular location is the cytoplasm. It carries out the reaction Hydrolyzes Xaa-Pro-|- bonds to release unblocked, N-terminal dipeptides from substrates including Ala-Pro-|-p-nitroanilide and (sequentially) Tyr-Pro-|-Phe-Pro-|-Gly-Pro-|-Ile.. In terms of biological role, removes N-terminal dipeptides sequentially from polypeptides having unsubstituted N-termini provided that the penultimate residue is proline. This chain is Xaa-Pro dipeptidyl-peptidase, found in Lacticaseibacillus casei (strain BL23) (Lactobacillus casei).